We begin with the raw amino-acid sequence, 573 residues long: Chaperone Ric-8 (573 aa).

Over residues 308–324 the composition is skewed to basic and acidic residues; that stretch reads ESHKEREQDNEKEKDTE. Disordered stretches follow at residues 308–329 and 473–493; these read ESHK…GAGA and GTDY…QQQQ. A phosphoserine mark is found at S477, S478, S480, and S483.

The protein belongs to the synembryn family. In terms of assembly, interacts with GDP-bound G(i)-alpha protein G-i-alpha-65A. Does not interact with G-alpha proteins when they are in complex with subunits beta and gamma. Interacts with Frq2 in a Ca(2+)-independent manner but does not interact with Frq1. In terms of tissue distribution, expression in the embryo is primarily neural.

It localises to the cytoplasm. Its subcellular location is the cell cortex. It is found in the presynapse. Its function is as follows. Chaperone that specifically binds and folds some, but not all, nascent G alpha proteins prior to G protein heterotrimer formation, promoting their stability and activity. Also acts as a guanine nucleotide exchange factor (GEF) for G alpha proteins by stimulating exchange of bound GDP for free GTP. Plays a key role in asymmetric spindle positioning, a step for asymmetric cell division that generates cell diversity during development by activating G(i) alpha protein independently of G-protein coupled receptors. Required during gastrulation and sensory organ precursor (SOP) formation. Plays a role in positively regulating synapse number and neurotransmitter release. The polypeptide is Chaperone Ric-8 (ric8a) (Drosophila melanogaster (Fruit fly)).